A 111-amino-acid polypeptide reads, in one-letter code: Nucleoid-associated protein Clim_0875 (111 aa).

The protein belongs to the YbaB/EbfC family. Homodimer.

It localises to the cytoplasm. The protein localises to the nucleoid. Binds to DNA and alters its conformation. May be involved in regulation of gene expression, nucleoid organization and DNA protection. The chain is Nucleoid-associated protein Clim_0875 from Chlorobium limicola (strain DSM 245 / NBRC 103803 / 6330).